Here is a 75-residue protein sequence, read N- to C-terminus: Small ribosomal subunit protein bS18 (75 aa).

The protein belongs to the bacterial ribosomal protein bS18 family. As to quaternary structure, part of the 30S ribosomal subunit. Forms a tight heterodimer with protein bS6.

Its function is as follows. Binds as a heterodimer with protein bS6 to the central domain of the 16S rRNA, where it helps stabilize the platform of the 30S subunit. This is Small ribosomal subunit protein bS18 (rbsR) from Rhodobacter capsulatus (strain ATCC BAA-309 / NBRC 16581 / SB1003).